A 596-amino-acid chain; its full sequence is Proline--tRNA ligase (596 aa).

This sequence belongs to the class-II aminoacyl-tRNA synthetase family. ProS type 1 subfamily. Homodimer.

It is found in the cytoplasm. The catalysed reaction is tRNA(Pro) + L-proline + ATP = L-prolyl-tRNA(Pro) + AMP + diphosphate. Catalyzes the attachment of proline to tRNA(Pro) in a two-step reaction: proline is first activated by ATP to form Pro-AMP and then transferred to the acceptor end of tRNA(Pro). As ProRS can inadvertently accommodate and process non-cognate amino acids such as alanine and cysteine, to avoid such errors it has two additional distinct editing activities against alanine. One activity is designated as 'pretransfer' editing and involves the tRNA(Pro)-independent hydrolysis of activated Ala-AMP. The other activity is designated 'posttransfer' editing and involves deacylation of mischarged Ala-tRNA(Pro). The misacylated Cys-tRNA(Pro) is not edited by ProRS. The protein is Proline--tRNA ligase of Prochlorococcus marinus (strain NATL1A).